The primary structure comprises 183 residues: MDIDPYKEFGATVELLSFLPSDFFPSVRDLLDTASALYREALESPEHCSPHHTALRQAILCWGELMTLATWVGVNLEDPASRDLVVSYVNTNMGLKFRQLLWFHISCLTFGRETVIEYLVAFGVWIRTPPAYRPPNAPILSTLPETTVVRRRGRSPRRRTPSPRRRRSQSPRRRRSQSRESQC.

The disordered stretch occupies residues 136-183 (NAPILSTLPETTVVRRRGRSPRRRTPSPRRRRSQSPRRRRSQSRESQC). Residues 149–176 (VRRRGRSPRRRTPSPRRRRSQSPRRRRS) show a composition bias toward basic residues. Phosphoserine; by host is present on residues S155, S162, and S170. Residues 155 to 161 (SPRRRTP) form a 1; half-length repeat. Positions 155 to 177 (SPRRRTPSPRRRRSQSPRRRRSQ) are 3 X 8 AA repeats of S-P-R-R-R-[PR]-S-Q. The Bipartite nuclear localization signal motif lies at 158–175 (RRTPSPRRRRSQSPRRRR). A run of 2 repeats spans residues 162-169 (SPRRRRSQ) and 170-177 (SPRRRRSQ). The interval 177–183 (QSRESQC) is RNA binding.

The protein belongs to the orthohepadnavirus core antigen family. As to quaternary structure, homodimerizes, then multimerizes. Interacts with cytosol exposed regions of viral L glycoprotein present in the reticulum-to-Golgi compartment. Interacts with human FLNB. Phosphorylated form interacts with host importin alpha; this interaction depends on the exposure of the NLS, which itself depends upon genome maturation and/or phosphorylation of the capsid protein. Interacts with host NUP153. Phosphorylated by host SRPK1, SRPK2, and maybe protein kinase C or GAPDH. Phosphorylation is critical for pregenomic RNA packaging. Protein kinase C phosphorylation is stimulated by HBx protein and may play a role in transport of the viral genome to the nucleus at the late step during the viral replication cycle.

The protein localises to the virion. It is found in the host cytoplasm. In terms of biological role, self assembles to form an icosahedral capsid. Most capsids appear to be large particles with an icosahedral symmetry of T=4 and consist of 240 copies of capsid protein, though a fraction forms smaller T=3 particles consisting of 180 capsid proteins. Entering capsids are transported along microtubules to the nucleus. Phosphorylation of the capsid is thought to induce exposure of nuclear localization signal in the C-terminal portion of the capsid protein that allows binding to the nuclear pore complex via the importin (karyopherin-) alpha and beta. Capsids are imported in intact form through the nuclear pore into the nuclear basket, where it probably binds NUP153. Only capsids that contain the mature viral genome can release the viral DNA and capsid protein into the nucleoplasm. Immature capsids get stuck in the basket. Capsids encapsulate the pre-genomic RNA and the P protein. Pre-genomic RNA is reverse-transcribed into DNA while the capsid is still in the cytoplasm. The capsid can then either be directed to the nucleus, providing more genomes for transcription, or bud through the endoplasmic reticulum to provide new virions. The chain is Capsid protein from Hepatitis B virus genotype D subtype ayw (isolate Italy/CI/1992) (HBV-D).